Reading from the N-terminus, the 741-residue chain is Eukaryotic translation initiation factor 3 subunit B (741 aa).

The span at 1–10 (MAPSFDTLSE) shows a compositional bias: polar residues. Residues 1–21 (MAPSFDTLSEQDLHEEEEEEI) are disordered. The region spanning 40-126 (TFIVIDGLPI…HTLAVNKLMD (87 aa)) is the RRM domain. 5 WD repeats span residues 193-230 (AHWTQLFVQWSPKGTYLASVHPQGVQLWGGPAFSKQKQ), 232-289 (PHPF…RSFV), 303-344 (APKK…LLGK), 514-557 (IEKK…EKAE), and 572-610 (VEHYGVTDIDWDPTGRYVVSSASVWTHSMENGWNIHTFA). The disordered stretch occupies residues 696 to 723 (DAYGIPEDADDAKVAKDAPPVSEDQGEA).

This sequence belongs to the eIF-3 subunit B family. In terms of assembly, component of the eukaryotic translation initiation factor 3 (eIF-3) complex.

Its subcellular location is the cytoplasm. Its function is as follows. RNA-binding component of the eukaryotic translation initiation factor 3 (eIF-3) complex, which is involved in protein synthesis of a specialized repertoire of mRNAs and, together with other initiation factors, stimulates binding of mRNA and methionyl-tRNAi to the 40S ribosome. The eIF-3 complex specifically targets and initiates translation of a subset of mRNAs involved in cell proliferation. In Aspergillus oryzae (strain ATCC 42149 / RIB 40) (Yellow koji mold), this protein is Eukaryotic translation initiation factor 3 subunit B (prt1).